Consider the following 349-residue polypeptide: Protein-arginine kinase (349 aa).

The Phosphagen kinase C-terminal domain maps to 24–252 (IVLSSRIRLA…SQIIEQERQA (229 aa)). Residues 27–31 (SSRIR), His89, Arg123, 174–178 (RASVM), and 205–210 (RGIYGE) contribute to the ATP site. The RDXXRA motif of the pArg binding pocket involved in allosteric regulation signature appears at 335 to 340 (RDIKRA).

Belongs to the ATP:guanido phosphotransferase family.

The catalysed reaction is L-arginyl-[protein] + ATP = N(omega)-phospho-L-arginyl-[protein] + ADP + H(+). Its activity is regulated as follows. Appears to be allosterically activated by the binding of pArg-containing polypeptides to the pArg-binding pocket localized in the C-terminal domain of McsB. In terms of biological role, catalyzes the specific phosphorylation of arginine residues in proteins. This Halothermothrix orenii (strain H 168 / OCM 544 / DSM 9562) protein is Protein-arginine kinase.